We begin with the raw amino-acid sequence, 211 residues long: DNA/RNA-binding protein ALBA2 (211 aa).

Basic and acidic residues predominate over residues 84–99; the sequence is NSGLKKNAKNEDKKSG. The interval 84–121 is disordered; that stretch reads NSGLKKNAKNEDKKSGDEEEEEEEEEEDEENNKNKEAN. Residues 100–113 are compositionally biased toward acidic residues; the sequence is DEEEEEEEEEEDEE.

The protein belongs to the histone-like Alba family. As to quaternary structure, identified in a TARE6-associated complex consisting of over 30 proteins and including ALBA1, ALBA2 and ALBA4; the complex binds to the non-coding subtelomeric repeat region TARE6.

Its subcellular location is the nucleus. It is found in the chromosome. It localises to the telomere. The protein localises to the cytoplasm. Functionally, possesses DNA- and RNA-binding activities. Binds to DNA with relaxed sequence specificity. Associates with the subtelomeric TARE6 repeats. The chain is DNA/RNA-binding protein ALBA2 from Plasmodium falciparum (isolate 3D7).